Reading from the N-terminus, the 254-residue chain is Sec-independent protein translocase protein TatCy (254 aa).

Helical transmembrane passes span 24–44, 67–87, 112–132, 157–177, 187–207, and 212–232; these read IVAL…KPII, LYVF…PVIL, VSIL…FPFV, FLLQ…ILMF, MFLA…AALI, and LLSH…SILI.

It belongs to the TatC family. In terms of assembly, forms a complex with TatAy. Two types of complexes exist: one composed of TatAy and TatCy, and another composed only of TatAy.

It localises to the cell membrane. Part of the twin-arginine translocation (Tat) system that transports large folded proteins containing a characteristic twin-arginine motif in their signal peptide across membranes. Required for YwbN secretion. The chain is Sec-independent protein translocase protein TatCy from Bacillus subtilis (strain 168).